A 93-amino-acid chain; its full sequence is MSDFENKNPNNVLGGHKATLHNPNVSEEAKEHSKKVLENAGEAYDESSSGKTTTDDGDKNPGNVAGGYKATLNNPKVSDEAKEHAKKKLDGLE.

A disordered region spans residues 1 to 93 (MSDFENKNPN…HAKKKLDGLE (93 aa)). 2 consecutive repeat copies span residues 7–37 (KNPN…KKVL) and 59–89 (KNPG…KKKL). A 2 X 30 AA approximate repeats region spans residues 7-89 (KNPNNVLGGH…EAKEHAKKKL (83 aa)). Basic and acidic residues-rich tracts occupy residues 27 to 37 (EEAKEHSKKVL) and 77 to 93 (VSDE…DGLE).

It belongs to the UPF0654 (con-6) family.

Its function is as follows. May protect dormant spores from desiccation and play a significant role in the formation or survival of microconidia and ascospores. In Neurospora crassa (strain ATCC 24698 / 74-OR23-1A / CBS 708.71 / DSM 1257 / FGSC 987), this protein is Conidiation-specific protein 6 (con-6).